A 420-amino-acid polypeptide reads, in one-letter code: MLKAVILIGGPQKGTRFRPLSFEVPKPLFPVAGVPMIQHHIEACAQVPGMQEILLIGFYQPDEPLTRFLEAAQQEFNLPIRYLQEFAPLGTGGGLYHFRDQILAGGPEAFFVLNADVCSDFPLSAMLDAHRHRPHPFLLLGTTANRTQSLNYGCIVENPQTHEVLHYVEKPSTFVSDIINCGIYLFSPETLKPLGKFFQRYQQGGQLEDSSVLWPGAGTIRLEQDVFAALAGQGQIYVHLTDGIWSQIKSAGSALYASRLYLSQYQLTHPERLAKHTPGGPRIRGNVYIHPTAKVAPSAVLGPNVSIGEGVTVGEGVRLRESIVLHGATLQEHTCVLHSIVGWGSTVGRWARVEGTPNDPNPNDPRAHMDSESLFKDGKLLPAITILGCRVRIPAEVLILNSIVLPHKELSRSFTNQIIL.

The interval 2 to 251 is substrate-binding domain; it reads LKAVILIGGP…DGIWSQIKSA (250 aa). 2 residues coordinate GDP-alpha-D-mannose: E85 and Q247. The tract at residues 273-420 is hexapeptide repeat domain; the sequence is LAKHTPGGPR…SRSFTNQIIL (148 aa). The segment at 356–384 is C-loop; it reads TPNDPNPNDPRAHMDSESLFKDGKLLPAI.

This sequence belongs to the transferase hexapeptide repeat family. Component of the GMPPA-GMPPB mannose-1-phosphate guanylyltransferase complex composed of 4 GMPPA subunits and 8 GMPPB subunits; the complex is organized into three layers, a central layer made up of 2 GMPPA dimers sandwiched between two layers each made up of 2 GMPPB dimers. Expressed in the liver (at protein level).

Its subcellular location is the cytoplasm. In terms of biological role, regulatory subunit of the GMPPA-GMPPB mannose-1-phosphate guanylyltransferase complex; reduces the catalytic activity of GMPPB when part of the complex. Mediates allosteric feedback inhibition of GMPPB catalytic activity upon binding GDP-alpha-D-mannose. Together with GMPPB regulates GDP-alpha-D-mannose levels. In Sus scrofa (Pig), this protein is Mannose-1-phosphate guanylyltransferase regulatory subunit alpha (GMPPA).